The following is a 337-amino-acid chain: Transaldolase (337 aa).

A Nuclear localization signal motif is present at residues 1–10 (MSGSPVKRQR). The residue at position 115 (Lys115) is an N6-acetyllysine. Catalysis depends on Lys142, which acts as the Schiff-base intermediate with substrate. Residue Lys219 is modified to N6-acetyllysine. Phosphoserine occurs at positions 237 and 256. 3 positions are modified to N6-acetyllysine: Lys269, Lys286, and Lys321.

The protein belongs to the transaldolase family. Type 1 subfamily. Homodimer. Interacts with KPNA1 and KPNA4.

The protein localises to the nucleus. The protein resides in the cytoplasm. The enzyme catalyses D-sedoheptulose 7-phosphate + D-glyceraldehyde 3-phosphate = D-erythrose 4-phosphate + beta-D-fructose 6-phosphate. Its pathway is carbohydrate degradation; pentose phosphate pathway; D-glyceraldehyde 3-phosphate and beta-D-fructose 6-phosphate from D-ribose 5-phosphate and D-xylulose 5-phosphate (non-oxidative stage): step 2/3. In terms of biological role, catalyzes the rate-limiting step of the non-oxidative phase in the pentose phosphate pathway. Catalyzes the reversible conversion of sedheptulose-7-phosphate and D-glyceraldehyde 3-phosphate into erythrose-4-phosphate and beta-D-fructose 6-phosphate. The polypeptide is Transaldolase (TALDO1) (Cricetulus griseus (Chinese hamster)).